Here is a 437-residue protein sequence, read N- to C-terminus: MFLAFDDTDSPSGMCTTYLMEEFLRKVNLDVIGYPRLVRLNPNIRYKTRGNGALSVHLGRGIGKKHTIGELHGKILYGYAEGEDEYDENVLYVMKDLVEKYSELDYFNTNPGIVVSKNPFPENYYWSALEREIRIEEAENFITENNGKFLKFKSGRGIIGSGAAISWPATRTTYEILAYKYPHPEEIETEKKMRLSILADTFRGTFNNVDIANKYPAIFPNPKTPVIFGIRGLYPSVLANAAKKVIDDGSINYDSTVTYLTNQATDDHIIDEPNVIEDLHSYKITAEIIDKPFSVAGGHYFVRSISRAGEFTAAAFEPTKEFRHTFSKLMPGDTVTFYGSFTNGNLNVEKMQIISVSRVFSRVTPLCKFCNTRTKSKGKNDFRCPKCGRRYNTPDYHEVKREISPGKYDVPVVARRHLSMPFEIESMFKTKINALEA.

It belongs to the TiaS family.

It localises to the cytoplasm. The catalysed reaction is cytidine(34) in tRNA(Ile2) + agmatine + ATP + H2O = 2-agmatinylcytidine(34) in tRNA(Ile2) + AMP + 2 phosphate + 2 H(+). In terms of biological role, ATP-dependent agmatine transferase that catalyzes the formation of 2-agmatinylcytidine (agm2C) at the wobble position (C34) of tRNA(Ile2), converting the codon specificity from AUG to AUA. In Thermoplasma volcanium (strain ATCC 51530 / DSM 4299 / JCM 9571 / NBRC 15438 / GSS1), this protein is tRNA(Ile2) 2-agmatinylcytidine synthetase TiaS.